The following is a 166-amino-acid chain: NADH-quinone oxidoreductase subunit B (166 aa).

[4Fe-4S] cluster is bound by residues Cys44, Cys45, Cys110, and Cys140.

This sequence belongs to the complex I 20 kDa subunit family. In terms of assembly, NDH-1 is composed of 14 different subunits. Subunits NuoB, C, D, E, F, and G constitute the peripheral sector of the complex. [4Fe-4S] cluster serves as cofactor.

The protein localises to the cell membrane. The catalysed reaction is a quinone + NADH + 5 H(+)(in) = a quinol + NAD(+) + 4 H(+)(out). Its function is as follows. NDH-1 shuttles electrons from NADH, via FMN and iron-sulfur (Fe-S) centers, to quinones in the respiratory chain. The immediate electron acceptor for the enzyme in this species is believed to be a menaquinone. Couples the redox reaction to proton translocation (for every two electrons transferred, four hydrogen ions are translocated across the cytoplasmic membrane), and thus conserves the redox energy in a proton gradient. The sequence is that of NADH-quinone oxidoreductase subunit B from Carboxydothermus hydrogenoformans (strain ATCC BAA-161 / DSM 6008 / Z-2901).